A 356-amino-acid polypeptide reads, in one-letter code: Probable butyrate kinase (356 aa).

Belongs to the acetokinase family.

The protein localises to the cytoplasm. The enzyme catalyses butanoate + ATP = butanoyl phosphate + ADP. The sequence is that of Probable butyrate kinase from Coprothermobacter proteolyticus (strain ATCC 35245 / DSM 5265 / OCM 4 / BT).